A 579-amino-acid polypeptide reads, in one-letter code: Keratinocyte proline-rich protein (579 aa).

Phosphoserine is present on Ser394. Positions 526 to 579 are disordered; it reads EAPYCGPSSYNQGQESGAGCGPGDVFPERRGQDGHGDQGNAFAGVKGEAKSAYF. Positions 551-561 are enriched in basic and acidic residues; that stretch reads FPERRGQDGHG.

Expressed in the upper layer of epidermis and psoriasis (at protein level). Expressed in the upper layer of epidermis and psoriasis.

The protein localises to the cytoplasm. The chain is Keratinocyte proline-rich protein (KPRP) from Homo sapiens (Human).